The chain runs to 151 residues: Protein NrdI (151 aa).

The protein belongs to the NrdI family.

Its function is as follows. Probably involved in ribonucleotide reductase function. The protein is Protein NrdI of Mycoplasmopsis pulmonis (strain UAB CTIP) (Mycoplasma pulmonis).